The sequence spans 334 residues: Putative peptide import ATP-binding protein BAB2_1053 (334 aa).

Positions 22 to 272 (VRTDDLVRDF…PLHPYSRALL (251 aa)) constitute an ABC transporter domain. 64 to 71 (GESGSGKS) lines the ATP pocket.

This sequence belongs to the ABC transporter superfamily. The complex is composed of two ATP-binding proteins (BAB2_1052 and BAB2_1053), two transmembrane proteins (BAB2_1050 and BAB2_1051) and a solute-binding protein (BAB2_1049).

It is found in the cell inner membrane. Its function is as follows. Probably part of an ABC transporter complex that could be involved in peptide import. Probably responsible for energy coupling to the transport system. The protein is Putative peptide import ATP-binding protein BAB2_1053 of Brucella abortus (strain 2308).